Reading from the N-terminus, the 625-residue chain is Probable inactive receptor kinase At5g16590 (625 aa).

The signal sequence occupies residues 1–23 (MKNKTNLGLSVFFFFICLVSVTS). LRR repeat units follow at residues 88–111 (KLET…ANLT), 112–134 (LLRY…LFTL), 136–158 (NIIR…VNSA), 160–182 (RLAT…KIKL), and 183–204 (QQFN…SGMP). A helical transmembrane segment spans residues 246–266 (AIVGIVIGCFVLLLVLFLIVF). Residues 343 to 613 (KASAEVLGKG…PEVTRLIEEV (271 aa)) form the Protein kinase domain. Position 345 is a phosphoserine (Ser345). Residues 349 to 357 (LGKGTFGSS) and Lys371 contribute to the ATP site. At Ser422 the chain carries Phosphoserine. Thr442 and Thr496 each carry phosphothreonine. Ser517 carries the post-translational modification Phosphoserine. A Phosphothreonine modification is found at Thr593. 2 positions are modified to phosphoserine: Ser619 and Ser624.

This sequence belongs to the protein kinase superfamily. Ser/Thr protein kinase family.

It localises to the cell membrane. Its function is as follows. Might be involved in early recognition of growth promoting fungi. Appears to be specific for P.indica. In Arabidopsis thaliana (Mouse-ear cress), this protein is Probable inactive receptor kinase At5g16590.